A 1021-amino-acid chain; its full sequence is Chondroitin sulfate ABC endolyase (1021 aa).

Residues 1–24 (MPIFRFTALAMTLGLLSAPYNAMA) form the signal peptide. Positions 43, 70, 73, and 211 each coordinate Na(+). His-501 serves as the catalytic Proton acceptor. Tyr-508 (proton donor) is an active-site residue.

The protein belongs to the polysaccharide lyase 8 family. As to quaternary structure, monomer.

Its subcellular location is the periplasm. It carries out the reaction Endolytic cleavage of (1-&gt;4)-beta-galactosaminic bonds between N-acetylgalactosamine and either D-glucuronic acid or L-iduronic acid to produce a mixture of Delta(4)-unsaturated oligosaccharides of different sizes that are ultimately degraded to Delta(4)-unsaturated tetra- and disaccharides.. Its activity is regulated as follows. Is inhibited by Zn(2+), Ni(2+), Fe(2+) and Cu(2+). In terms of biological role, endolytic, broad-specificity glycosaminoglycan lyase, which degrades the polysaccharides chondroitin, chondroitin-4-sulfate, chondroitin-6-sulfate, dermatan sulfate and to a lesser extent hyaluronan, by beta-elimination of 1,4-hexosaminidic bond to unsaturated tetrasaccharides and disaccharides. Is not active against keratan sulfate, heparan sulfate, and heparin. Is able to promote functional recovery in the injured central nervous system (CNS), via its role in the disruption of the normal organization of the extracellular matrix (ECM). This chain is Chondroitin sulfate ABC endolyase, found in Proteus vulgaris.